The following is a 425-amino-acid chain: Serine--tRNA ligase (425 aa).

The segment at 110 to 134 (NLPSADAPEGKSEADNVEVKRWGEP) is disordered. Residues 117–134 (PEGKSEADNVEVKRWGEP) show a composition bias toward basic and acidic residues. Residue 233–235 (TAE) participates in L-serine binding. Position 264–266 (264–266 (RRE)) interacts with ATP. Glu287 serves as a coordination point for L-serine. 351–354 (EISS) serves as a coordination point for ATP. Ser385 lines the L-serine pocket.

This sequence belongs to the class-II aminoacyl-tRNA synthetase family. Type-1 seryl-tRNA synthetase subfamily. As to quaternary structure, homodimer. The tRNA molecule binds across the dimer.

The protein localises to the cytoplasm. The catalysed reaction is tRNA(Ser) + L-serine + ATP = L-seryl-tRNA(Ser) + AMP + diphosphate + H(+). The enzyme catalyses tRNA(Sec) + L-serine + ATP = L-seryl-tRNA(Sec) + AMP + diphosphate + H(+). Its pathway is aminoacyl-tRNA biosynthesis; selenocysteinyl-tRNA(Sec) biosynthesis; L-seryl-tRNA(Sec) from L-serine and tRNA(Sec): step 1/1. Catalyzes the attachment of serine to tRNA(Ser). Is also able to aminoacylate tRNA(Sec) with serine, to form the misacylated tRNA L-seryl-tRNA(Sec), which will be further converted into selenocysteinyl-tRNA(Sec). The sequence is that of Serine--tRNA ligase from Synechococcus sp. (strain RCC307).